Here is a 909-residue protein sequence, read N- to C-terminus: Ribosome-releasing factor 2, mitochondrial (909 aa).

Residues 1 to 15 (MVAAPLLRAHQAARL) constitute a mitochondrion transit peptide. The region spanning 57–367 (DRTRNIGIIA…AVTNLLPSPP (311 aa)) is the tr-type G domain. 66–73 (AHIDAGKT) provides a ligand contact to GTP. Residues 121-148 (WPPQTAGDGNTTPQEPQTPRSASSHTVN) are disordered. Residues 127-148 (GDGNTTPQEPQTPRSASSHTVN) are compositionally biased toward polar residues. GTP-binding positions include 151 to 155 (DTPGH) and 205 to 208 (NKLD).

This sequence belongs to the TRAFAC class translation factor GTPase superfamily. Classic translation factor GTPase family. EF-G/EF-2 subfamily.

The protein localises to the mitochondrion. Its function is as follows. Mitochondrial GTPase that mediates the disassembly of ribosomes from messenger RNA at the termination of mitochondrial protein biosynthesis. Not involved in the GTP-dependent ribosomal translocation step during translation elongation. In Aspergillus flavus (strain ATCC 200026 / FGSC A1120 / IAM 13836 / NRRL 3357 / JCM 12722 / SRRC 167), this protein is Ribosome-releasing factor 2, mitochondrial (mef2).